A 400-amino-acid chain; its full sequence is Putative F-box protein At5g41510 (400 aa).

The F-box domain occupies 2–47; the sequence is ATMISNLPRDLIEEIFSRVPLTSMKAVRLTCKSWNNLSKSESFTKV.

The chain is Putative F-box protein At5g41510 from Arabidopsis thaliana (Mouse-ear cress).